The chain runs to 438 residues: 2-(3-amino-3-carboxypropyl)histidine synthase subunit 1 (438 aa).

The interval 7–29 (SGAAEQGGRDGPGRGRAPRGRVA) is disordered. Residues C110, C214, and C342 each contribute to the [4Fe-4S] cluster site. A disordered region spans residues 391 to 421 (VNHGQDRRPHAPGRPARGKVQEGSARPPSAV).

This sequence belongs to the DPH1/DPH2 family. DPH1 subfamily. In terms of assembly, component of the 2-(3-amino-3-carboxypropyl)histidine synthase complex composed of DPH1, DPH2, DPH3 and a NADH-dependent reductase. Interacts with DPH2. Interacts with RBM8A. The cofactor is [4Fe-4S] cluster. Expressed in heart, brain, placenta, lung, liver, skeletal muscle, kidney, pancreas, spleen, thymus, mammary gland, colon, small intestine, testis and ovary. Reduced expression in primary breast and ovarian tumors.

It localises to the nucleus. It is found in the cytoplasm. It catalyses the reaction L-histidyl-[translation elongation factor 2] + S-adenosyl-L-methionine = 2-[(3S)-amino-3-carboxypropyl]-L-histidyl-[translation elongation factor 2] + S-methyl-5'-thioadenosine + H(+). It functions in the pathway protein modification; peptidyl-diphthamide biosynthesis. Functionally, catalyzes the first step of diphthamide biosynthesis, a post-translational modification of histidine which occurs in elongation factor 2. DPH1 and DPH2 transfer a 3-amino-3-carboxypropyl (ACP) group from S-adenosyl-L-methionine (SAM) to a histidine residue, the reaction is assisted by a reduction system comprising DPH3 and a NADH-dependent reductase. Acts as a tumor suppressor. In Homo sapiens (Human), this protein is 2-(3-amino-3-carboxypropyl)histidine synthase subunit 1.